A 367-amino-acid chain; its full sequence is Anhydro-N-acetylmuramic acid kinase (367 aa).

11–18 (GTSLDGVD) is an ATP binding site.

Belongs to the anhydro-N-acetylmuramic acid kinase family.

The catalysed reaction is 1,6-anhydro-N-acetyl-beta-muramate + ATP + H2O = N-acetyl-D-muramate 6-phosphate + ADP + H(+). It functions in the pathway amino-sugar metabolism; 1,6-anhydro-N-acetylmuramate degradation. The protein operates within cell wall biogenesis; peptidoglycan recycling. Its function is as follows. Catalyzes the specific phosphorylation of 1,6-anhydro-N-acetylmuramic acid (anhMurNAc) with the simultaneous cleavage of the 1,6-anhydro ring, generating MurNAc-6-P. Is required for the utilization of anhMurNAc either imported from the medium or derived from its own cell wall murein, and thus plays a role in cell wall recycling. The polypeptide is Anhydro-N-acetylmuramic acid kinase (Rhodopseudomonas palustris (strain ATCC BAA-98 / CGA009)).